The primary structure comprises 462 residues: Argininosuccinate lyase (462 aa).

The protein belongs to the lyase 1 family. Argininosuccinate lyase subfamily.

It is found in the cytoplasm. It carries out the reaction 2-(N(omega)-L-arginino)succinate = fumarate + L-arginine. The protein operates within amino-acid biosynthesis; L-arginine biosynthesis; L-arginine from L-ornithine and carbamoyl phosphate: step 3/3. The polypeptide is Argininosuccinate lyase (Gloeothece citriformis (strain PCC 7424) (Cyanothece sp. (strain PCC 7424))).